Here is a 152-residue protein sequence, read N- to C-terminus: Large ribosomal subunit protein uL15 (152 aa).

The interval 1 to 57 (MTSTLNTLKSNSGSRKKKLRKGRGIAAGQGASCGFGMRGQKSRSGRPTRPGFEGGQM) is disordered. The segment covering 14–23 (SRKKKLRKGR) has biased composition (basic residues). The segment covering 25–37 (IAAGQGASCGFGM) has biased composition (gly residues).

Belongs to the universal ribosomal protein uL15 family. In terms of assembly, part of the 50S ribosomal subunit.

Binds to the 23S rRNA. This chain is Large ribosomal subunit protein uL15, found in Prochlorococcus marinus (strain AS9601).